Here is a 129-residue protein sequence, read N- to C-terminus: MAKAPVRARKRVRKQVSDGVAHIHASFNNTIVTITDRQGNALGWATAGGSGFRGSRKSTPFAAQVAAERCADAVKEYGIKNLEVMVKGPGPGRESTIRALNAAGFRITNITDVTPIPHNGCRPPKKRRV.

This sequence belongs to the universal ribosomal protein uS11 family. In terms of assembly, part of the 30S ribosomal subunit. Interacts with proteins S7 and S18. Binds to IF-3.

Located on the platform of the 30S subunit, it bridges several disparate RNA helices of the 16S rRNA. Forms part of the Shine-Dalgarno cleft in the 70S ribosome. The protein is Small ribosomal subunit protein uS11 of Salmonella newport (strain SL254).